A 289-amino-acid chain; its full sequence is Nitrogenase iron protein (289 aa).

Residue 8 to 15 (GKGGIGKS) coordinates ATP. Cys96 serves as a coordination point for [4Fe-4S] cluster. ADP-ribosylarginine; by dinitrogenase reductase ADP-ribosyltransferase is present on Arg99. Cys130 contacts [4Fe-4S] cluster.

It belongs to the NifH/BchL/ChlL family. As to quaternary structure, homodimer. Requires [4Fe-4S] cluster as cofactor. Post-translationally, the reversible ADP-ribosylation of Arg-99 inactivates the nitrogenase reductase and regulates nitrogenase activity.

The catalysed reaction is N2 + 8 reduced [2Fe-2S]-[ferredoxin] + 16 ATP + 16 H2O = H2 + 8 oxidized [2Fe-2S]-[ferredoxin] + 2 NH4(+) + 16 ADP + 16 phosphate + 6 H(+). Functionally, the key enzymatic reactions in nitrogen fixation are catalyzed by the nitrogenase complex, which has 2 components: the iron protein and the molybdenum-iron protein. In Parafrankia sp. (strain EAN1pec), this protein is Nitrogenase iron protein.